A 368-amino-acid chain; its full sequence is Quinolinate synthase (368 aa).

2 residues coordinate iminosuccinate: His46 and Ser63. Residue Cys110 coordinates [4Fe-4S] cluster. Iminosuccinate-binding positions include Tyr141–Asn143 and Ser162. Cys230 is a [4Fe-4S] cluster binding site. Iminosuccinate is bound by residues His256–Glu258 and Thr273. Cys320 is a [4Fe-4S] cluster binding site.

It belongs to the quinolinate synthase family. Type 3 subfamily. The cofactor is [4Fe-4S] cluster.

It localises to the cytoplasm. The catalysed reaction is iminosuccinate + dihydroxyacetone phosphate = quinolinate + phosphate + 2 H2O + H(+). It functions in the pathway cofactor biosynthesis; NAD(+) biosynthesis; quinolinate from iminoaspartate: step 1/1. Its function is as follows. Catalyzes the condensation of iminoaspartate with dihydroxyacetone phosphate to form quinolinate. The sequence is that of Quinolinate synthase from Bacillus cereus (strain ATCC 10987 / NRS 248).